We begin with the raw amino-acid sequence, 166 residues long: Regulatory protein RecX (166 aa).

This sequence belongs to the RecX family.

Its subcellular location is the cytoplasm. Modulates RecA activity. This is Regulatory protein RecX from Escherichia coli (strain SE11).